A 1610-amino-acid chain; its full sequence is Adenylate cyclase type 10 (1610 aa).

2 consecutive Guanylate cyclase domains span residues 42–179 (VLMF…RLAQ) and 293–418 (TIVF…ARMM). Positions 47 and 48 each coordinate Mg(2+). 47-52 (DISGFT) serves as a coordination point for ATP. Hydrogencarbonate is bound at residue K95. D99 provides a ligand contact to Mg(2+). 2 residues coordinate ATP: D99 and K144. V167, R176, and M337 together coordinate hydrogencarbonate. ATP contacts are provided by residues V406 and 412–416 (NLAAR).

It belongs to the adenylyl cyclase class-4/guanylyl cyclase family. The cofactor is Mg(2+). Mn(2+) serves as cofactor. Cleavage may occur to generate the active 48 kDa form. As to expression, detected in airway epithelial cells and testis (at protein level). Weakly expressed in multiple tissues. Expressed in brain, heart, kidney, liver, lung, pancreas, peripheral blood leukocytes, placenta, skeletal muscle, stomach, thymus, airway epithelial cells, duodenum, jejunum and ileum. Very low level of expression in bone.

It is found in the cell membrane. Its subcellular location is the cytoplasm. The protein resides in the cytoskeleton. It localises to the perinuclear region. The protein localises to the nucleus. It is found in the cell projection. Its subcellular location is the cilium. The protein resides in the mitochondrion. The enzyme catalyses ATP = 3',5'-cyclic AMP + diphosphate. With respect to regulation, activated by manganese or magnesium ions. In the presence of magnesium ions, the enzyme is activated by bicarbonate. In the presence of manganese ions, the enzyme is inhibited by bicarbonate. In the absence of magnesium and bicarbonate, the enzyme is weakly activated by calcium. Calcium mildly increases the enzyme activity, also in the presence of magnesium ions. In terms of biological role, catalyzes the formation of the signaling molecule cAMP. May function as sensor that mediates responses to changes in cellular bicarbonate and CO(2) levels. Has a critical role in mammalian spermatogenesis by producing the cAMP which regulates cAMP-responsive nuclear factors indispensable for sperm maturation in the epididymis. Induces capacitation, the maturational process that sperm undergo prior to fertilization. Involved in ciliary beat regulation. This chain is Adenylate cyclase type 10 (ADCY10), found in Homo sapiens (Human).